Consider the following 378-residue polypeptide: Putative glycosyltransferase ORF378 (378 aa).

This sequence belongs to the glycosyltransferase group 1 family. Glycosyltransferase 4 subfamily.

The sequence is that of Putative glycosyltransferase ORF378 from Acidianus sp. F28 (AFV-2).